The following is a 94-amino-acid chain: ESAT-6-like protein EsxO (94 aa).

This sequence belongs to the WXG100 family. ESAT-6 subfamily. As to quaternary structure, forms a complex with EsxP.

The protein localises to the secreted. In Mycobacterium tuberculosis (strain CDC 1551 / Oshkosh), this protein is ESAT-6-like protein EsxO.